Here is a 330-residue protein sequence, read N- to C-terminus: Glucosyltransferase 3 (330 aa).

T16 contacts UDP. The interval 106 to 111 is substrate protein-binding loop; sequence MFSGNF. Residues R179, 211-214, and 244-249 contribute to the UDP site; these read YRPD and SYKLGS.

It belongs to the Gtf3 glucosyltransferase family. In terms of assembly, homotetramer; a dimer of dimers. It depends on In vitro glycosyltransferase activity is metal-independent. as a cofactor.

Its pathway is protein modification; protein glycosylation. Functionally, required for polymorphic O-glycosylation of the serine-rich repeat protein Fap1. Catalyzes the second step in glycosylation of the serine-rich repeat protein in this bacteria. Transfers glucose from UDP-glucose to the terminal GlcNAc moiety of 3-O-(N-acetyl-alpha-D-glucosaminyl)-L-seryl-[protein] which results from the first glycosylation step of Fap1; does not use other sugar nucleotides as substrates. This Streptococcus parasanguinis protein is Glucosyltransferase 3.